The sequence spans 136 residues: Protein PsiE (136 aa).

The next 4 membrane-spanning stretches (helical) occupy residues 15-35, 55-75, 83-103, and 108-128; these read ILQN…VVFL, YELV…ALIV, HFPL…LIIV, and PMDV…LWLC.

This sequence belongs to the PsiE family.

The protein resides in the cell inner membrane. This is Protein PsiE from Salmonella gallinarum (strain 287/91 / NCTC 13346).